Consider the following 310-residue polypeptide: Dopamine receptor-interacting protein 1 (310 aa).

As to quaternary structure, interacts with DRD1.

Its function is as follows. Could be a regulator of the dopamine receptor signaling pathway. The sequence is that of Dopamine receptor-interacting protein 1 from Homo sapiens (Human).